We begin with the raw amino-acid sequence, 290 residues long: F-box protein PP2-A13 (290 aa).

Residues 21-67 enclose the F-box domain; it reads RKLRLVDLPENCVALIMTRLDPPEICRLARLNRMFRRASSADFIWES.

Part of a SCF (ASK-cullin-F-box) protein ligase complex. Interacts with SKP1A/ASK1, SKP1B/ASK2, ASK5, ASK11 and ASK13.

The protein resides in the nucleus. The protein operates within protein modification; protein ubiquitination. Functionally, component of SCF(ASK-cullin-F-box) E3 ubiquitin ligase complexes, which may mediate the ubiquitination and subsequent proteasomal degradation of target proteins. In Arabidopsis thaliana (Mouse-ear cress), this protein is F-box protein PP2-A13 (PP2A13).